A 484-amino-acid polypeptide reads, in one-letter code: Adenylyltransferase and sulfurtransferase uba4 (484 aa).

The segment covering 39–49 (AKAQSAAATTA) has biased composition (low complexity). The interval 39 to 58 (AKAQSAAATTAGDNHDKPRR) is disordered. Residues G98, D119, 126-130 (SNLHR), K143, and 187-188 (DN) each bind ATP. Positions 236 and 239 each coordinate Zn(2+). The active-site Glycyl thioester intermediate; for adenylyltransferase activity is C253. The Zn(2+) site is built by C313 and C316. In terms of domain architecture, Rhodanese spans 370–482 (PEKTPTLIDV…WREQVDPEWP (113 aa)). The active-site Cysteine persulfide intermediate; for sulfurtransferase activity is C437.

In the N-terminal section; belongs to the HesA/MoeB/ThiF family. UBA4 subfamily. It depends on Zn(2+) as a cofactor.

It localises to the cytoplasm. The protein resides in the cytosol. It carries out the reaction [molybdopterin-synthase sulfur-carrier protein]-C-terminal Gly-Gly + ATP + H(+) = [molybdopterin-synthase sulfur-carrier protein]-C-terminal Gly-Gly-AMP + diphosphate. It catalyses the reaction [molybdopterin-synthase sulfur-carrier protein]-C-terminal Gly-Gly-AMP + S-sulfanyl-L-cysteinyl-[cysteine desulfurase] + AH2 = [molybdopterin-synthase sulfur-carrier protein]-C-terminal-Gly-aminoethanethioate + L-cysteinyl-[cysteine desulfurase] + A + AMP + 2 H(+). It functions in the pathway tRNA modification; 5-methoxycarbonylmethyl-2-thiouridine-tRNA biosynthesis. It participates in cofactor biosynthesis; molybdopterin biosynthesis. In terms of biological role, plays a central role in 2-thiolation of mcm(5)S(2)U at tRNA wobble positions of cytosolic tRNA(Lys), tRNA(Glu) and tRNA(Gln). Also essential during biosynthesis of the molybdenum cofactor. Acts by mediating the C-terminal thiocarboxylation of sulfur carriers urm1 and mocs2a. Its N-terminus first activates urm1 and mocs2a as acyl-adenylates (-COAMP), then the persulfide sulfur on the catalytic cysteine is transferred to urm1 and mocs2a to form thiocarboxylation (-COSH) of their C-terminus. The reaction probably involves hydrogen sulfide that is generated from the persulfide intermediate and that acts as a nucleophile towards urm1 and mocs2a. Subsequently, a transient disulfide bond is formed. Does not use thiosulfate as sulfur donor; nfs1 probably acting as a sulfur donor for thiocarboxylation reactions. The polypeptide is Adenylyltransferase and sulfurtransferase uba4 (Aspergillus terreus (strain NIH 2624 / FGSC A1156)).